A 300-amino-acid polypeptide reads, in one-letter code: MTSLSPLLEKFRAHLEDEKGSSPHTVRNYLIDLVDFERYLVERMKLSLLSGTHAAIRGYLGTLSTDHAPASRARRLASIKSFYKYLVRQKLLPASPAKLVKSPKLPKTLPKVLPVEEVFAILDMPDVKTVLGLRDRAILELLYGGGLRISELCGLDLLDIDRSGRIVRVMGKGSKERLVPVNAQSIRALEAYLARRGELLATIRKDQAPEAMFLNFRGGRLTPRSIARHLDTYVLKCALTRKVSPHAMRHSFATHLLGGGADIRSIQELLGHSSLSTTQRYTQVTWEQLQQVYDSAHPRA.

A Core-binding (CB) domain is found at 2–87; that stretch reads TSLSPLLEKF…SIKSFYKYLV (86 aa). A Tyr recombinase domain is found at 108-294; sequence TLPKVLPVEE…TWEQLQQVYD (187 aa). Active-site residues include Arg-148, Lys-172, His-246, Arg-249, and His-272. The active-site O-(3'-phospho-DNA)-tyrosine intermediate is Tyr-281.

Belongs to the 'phage' integrase family. XerC subfamily. In terms of assembly, forms a cyclic heterotetrameric complex composed of two molecules of XerC and two molecules of XerD.

It is found in the cytoplasm. In terms of biological role, site-specific tyrosine recombinase, which acts by catalyzing the cutting and rejoining of the recombining DNA molecules. The XerC-XerD complex is essential to convert dimers of the bacterial chromosome into monomers to permit their segregation at cell division. It also contributes to the segregational stability of plasmids. In Myxococcus xanthus, this protein is Tyrosine recombinase XerC.